The chain runs to 249 residues: Probable transcriptional regulatory protein DICTH_1505 (249 aa).

This sequence belongs to the TACO1 family.

The protein resides in the cytoplasm. The polypeptide is Probable transcriptional regulatory protein DICTH_1505 (Dictyoglomus thermophilum (strain ATCC 35947 / DSM 3960 / H-6-12)).